The chain runs to 1388 residues: Retrotransposon Gag-like protein 9 (1388 aa).

Disordered regions lie at residues 491–511 (ATASGKMSTPLRRAPTSGAMS), 769–790 (TPLMRTSDPGERPSLLTRASSS), 895–918 (GGVSSPLVRAPASGTMSTPLRRPS), 1100–1138 (TDSGEASTSHINITASGSKPTSHMTATTPETAKPPPKEV), and 1336–1388 (AMGN…HTNK). A compositionally biased stretch (polar residues) spans 1103 to 1123 (GEASTSHINITASGSKPTSHM). A compositionally biased stretch (basic and acidic residues) spans 1359–1374 (YLKEHGDPQEGLHDHL).

This Homo sapiens (Human) protein is Retrotransposon Gag-like protein 9.